The primary structure comprises 291 residues: Filament protein FIN1 (291 aa).

The residue at position 54 (serine 54) is a Phosphoserine. Threonine 68 is modified (phosphothreonine). Serine 74 and serine 88 each carry phosphoserine. Residues 254-284 are a coiled coil; the sequence is VELKEIKDLLLQMLRRQREIESRLSNIELQL.

In terms of assembly, homooligomer; in vitro, FIN1 self-assembles into 10 nm diameter filaments. Interacts with the 14-3-3 proteins BMH1 and BMH2, and the protein phosphatase 1 complex catalytic subunit GLC7. Phosphorylated by CDC28. Phosphorylation is required for BMH1 and BMH2 interaction. Dephosphorylation by GLC7 depends on the presence of BMH1 and BMH2.

The protein resides in the nucleus. It is found in the cytoplasm. Its subcellular location is the cytoskeleton. The protein localises to the spindle pole. Its function is as follows. Forms cell-cycle specific filaments between the spindle pole bodies of dividing yeast cells. The sequence is that of Filament protein FIN1 (FIN1) from Saccharomyces cerevisiae (strain ATCC 204508 / S288c) (Baker's yeast).